A 530-amino-acid chain; its full sequence is Calcium uptake protein 3, mitochondrial (530 aa).

Residues 1-43 (MAALRRLLWPPPRVSPPLCAHQPLLGPWGRPAVTTLGLPGRPF) constitute a mitochondrion transit peptide. The tract at residues 92-115 (GSPATGRPSKSAATEPEDPPRGRG) is disordered. The region spanning 232–267 (KPHAGFRIAFNMFDTDGNEMVDKKEFLVLQEIFRKK) is the EF-hand 1 domain. The Ca(2+) site is built by D245, D247, N249, M251, D253, and E256. An EF-hand 2; degenerate domain is found at 401–436 (VENTSVFLENVRYSIPEEKGITFDEFRSFFQFLNNL). Positions 470-505 (FSPHLVNTVFKIFDVDKDDQLSYKEFIGIMKDRLHR) constitute an EF-hand 3 domain. Residues D483, D485, D487, Q489, and E494 each contribute to the Ca(2+) site.

Belongs to the MICU1 family. MICU3 subfamily. In terms of assembly, heterodimer; disulfide-linked; heterodimerizes with MICU1. Component of the uniplex complex, composed of MCU, EMRE/SMDT1, MICU1 and MICU3 in a 4:4:1:1 stoichiometry. As to expression, specifically expressed in the central nervous system and skeletal muscle.

It localises to the mitochondrion intermembrane space. The protein localises to the mitochondrion inner membrane. In terms of biological role, tissue-specific calcium sensor of the mitochondrial calcium uniporter (MCU) channel, which specifically regulates MCU channel activity in the central nervous system and skeletal muscle. Senses calcium level via its EF-hand domains: compared to MICU1 and MICU2, MICU3 has a higher affinity for calcium. MICU1 and MICU3 form a disulfide-linked heterodimer that stimulates and inhibits MCU activity, depending on the concentration of calcium. At low calcium levels, MICU1 occludes the pore of the MCU channel, preventing mitochondrial calcium uptake. At higher calcium levels, calcium-binding to MICU1 and MICU3 induces a conformational change that weakens MCU-MICU1 interactions and moves the MICU1-MICU3 heterodimer away from the pore, allowing calcium permeation through the MCU channel. The high calcium affinity of MICU3 lowers the calcium threshold necessary for calcium permeation through the MCU channel. The MICU1-MICU3 heterodimer promotes flexibility of neurotransmission in neuronal cells by enhancing mitochondrial calcium uptake in presynapses. It is also required to increase mitochondrial calcium uptake in skeletal muscle cells, thereby increasing ATP production. The sequence is that of Calcium uptake protein 3, mitochondrial from Homo sapiens (Human).